A 121-amino-acid polypeptide reads, in one-letter code: U15-barytoxin-Tl1a (121 aa).

Positions 1 to 17 (MKLSVIVLVASFGFAVA) are cleaved as a signal peptide. 4 cysteine pairs are disulfide-bonded: cysteine 56–cysteine 74, cysteine 67–cysteine 80, cysteine 71–cysteine 119, and cysteine 73–cysteine 90.

It belongs to the neurotoxin 03 (Tx2) family. 03 subfamily. Expressed by the venom gland.

It localises to the secreted. Its function is as follows. Ion channel inhibitor. This Trittame loki (Brush-footed trapdoor spider) protein is U15-barytoxin-Tl1a.